Consider the following 335-residue polypeptide: UPF0284 protein TON_0688 (335 aa).

Belongs to the UPF0284 family.

The chain is UPF0284 protein TON_0688 from Thermococcus onnurineus (strain NA1).